The following is a 668-amino-acid chain: UvrABC system protein B (668 aa).

Positions N25–P413 constitute a Helicase ATP-binding domain. ATP is bound at residue G38–T45. The Beta-hairpin signature appears at Y91 to V114. One can recognise a Helicase C-terminal domain in the interval Q429–L595. A UVR domain is found at T629–K664.

Belongs to the UvrB family. As to quaternary structure, forms a heterotetramer with UvrA during the search for lesions. Interacts with UvrC in an incision complex.

It is found in the cytoplasm. Its function is as follows. The UvrABC repair system catalyzes the recognition and processing of DNA lesions. A damage recognition complex composed of 2 UvrA and 2 UvrB subunits scans DNA for abnormalities. Upon binding of the UvrA(2)B(2) complex to a putative damaged site, the DNA wraps around one UvrB monomer. DNA wrap is dependent on ATP binding by UvrB and probably causes local melting of the DNA helix, facilitating insertion of UvrB beta-hairpin between the DNA strands. Then UvrB probes one DNA strand for the presence of a lesion. If a lesion is found the UvrA subunits dissociate and the UvrB-DNA preincision complex is formed. This complex is subsequently bound by UvrC and the second UvrB is released. If no lesion is found, the DNA wraps around the other UvrB subunit that will check the other stand for damage. In Francisella tularensis subsp. tularensis (strain SCHU S4 / Schu 4), this protein is UvrABC system protein B.